Reading from the N-terminus, the 735-residue chain is Exocyst complex component 7 (735 aa).

Coiled-coil stretches lie at residues 5-42 and 63-85; these read QEAS…TKNM and VHKQ…SCLD. Residue serine 133 is modified to Phosphoserine. Residues 239–268 form a disordered region; it reads HKSSSSSGVPYSPAIPNKRKDTPTKKPVKR.

The protein belongs to the EXO70 family. In terms of assembly, the exocyst complex is composed of EXOC1, EXOC2, EXOC3, EXOC4, EXOC5, EXOC6, EXOC7 and EXOC8. Interacts with ARHQ in a GTP-dependent manner. Interacts with RAB11FIP3. In terms of tissue distribution, abundant in the ventricular zone, the outer subventricular zone and the cortical plate of the fetal cortex.

It localises to the cytoplasm. Its subcellular location is the cytosol. The protein resides in the cell membrane. It is found in the midbody. The protein localises to the midbody ring. Functionally, component of the exocyst complex involved in the docking of exocytic vesicles with fusion sites on the plasma membrane. In adipocytes, plays a crucial role in targeting SLC2A4 vesicle to the plasma membrane in response to insulin, perhaps directing the vesicle to the precise site of fusion. It is required for neuron survival and plays an essential role in cortical development. The sequence is that of Exocyst complex component 7 (EXOC7) from Homo sapiens (Human).